A 242-amino-acid chain; its full sequence is MSKRRIAPLTFLRRLLLRILAALAVFWGGGIALFSVVPVPFSAVMAERQISAWLSGEFGYVAHSDWVSMADISPWMGLAVIAAEDQKFPEHWGFDVPAIEKALAHNERNESRIRGASTLSQQTAKNLFLWDGRSWVRKGLEAGLTLGIETVWSKKRILTVYLNIAEFGDGIFGVEAAAQRYFHKPASRLSMSEAALLAAVLPNPLRYKANAPSGYVRSRQAWIMRQMRQLGGESFMTRNQLN.

The chain crosses the membrane as a helical span at residues 19 to 39; the sequence is ILAALAVFWGGGIALFSVVPV.

The protein belongs to the glycosyltransferase 51 family.

The protein localises to the cell inner membrane. The enzyme catalyses [GlcNAc-(1-&gt;4)-Mur2Ac(oyl-L-Ala-gamma-D-Glu-L-Lys-D-Ala-D-Ala)](n)-di-trans,octa-cis-undecaprenyl diphosphate + beta-D-GlcNAc-(1-&gt;4)-Mur2Ac(oyl-L-Ala-gamma-D-Glu-L-Lys-D-Ala-D-Ala)-di-trans,octa-cis-undecaprenyl diphosphate = [GlcNAc-(1-&gt;4)-Mur2Ac(oyl-L-Ala-gamma-D-Glu-L-Lys-D-Ala-D-Ala)](n+1)-di-trans,octa-cis-undecaprenyl diphosphate + di-trans,octa-cis-undecaprenyl diphosphate + H(+). It participates in cell wall biogenesis; peptidoglycan biosynthesis. Peptidoglycan polymerase that catalyzes glycan chain elongation from lipid-linked precursors. The protein is Biosynthetic peptidoglycan transglycosylase of Salmonella schwarzengrund (strain CVM19633).